A 178-amino-acid chain; its full sequence is Large ribosomal subunit protein uL6 (178 aa).

The protein belongs to the universal ribosomal protein uL6 family. As to quaternary structure, part of the 50S ribosomal subunit.

This protein binds to the 23S rRNA, and is important in its secondary structure. It is located near the subunit interface in the base of the L7/L12 stalk, and near the tRNA binding site of the peptidyltransferase center. In Listeria monocytogenes serotype 4a (strain HCC23), this protein is Large ribosomal subunit protein uL6.